Reading from the N-terminus, the 188-residue chain is NYHVLLGQNNLSEDVQHRLVSQSFRHPDYKPFLMRNHTRKPKDYSNDLMLLHLSEPADITDGVKVIDLPTKEPKVGSTCLVSGWGSTNPSEWEFPDDLQCVNIHLLSNEKCIKAYKEKVTDLMLCAGELEGGKDTCRGDSGGPLICDGVLQGITSWGSVPCGEPNKPGIYTKLIKFTSWIKEVMKENP.

Positions 1–185 constitute a Peptidase S1 domain; it reads NYHVLLGQNN…FTSWIKEVMK (185 aa). Asn10 and Asn36 each carry an N-linked (GlcNAc...) asparagine glycan. The active-site Charge relay system is the Asp47. 3 disulfide bridges follow: Cys79–Cys146, Cys111–Cys125, and Cys136–Cys161. The active-site Charge relay system is the Ser140.

The protein belongs to the peptidase S1 family. Kallikrein subfamily.

The catalysed reaction is Preferential cleavage of Arg-|-Xaa bonds in small molecule substrates. Highly selective action to release kallidin (lysyl-bradykinin) from kininogen involves hydrolysis of Met-|-Xaa or Leu-|-Xaa.. Glandular kallikreins cleave Met-Lys and Arg-Ser bonds in kininogen to release Lys-bradykinin. In Rattus norvegicus (Rat), this protein is Glandular kallikrein-3, submandibular (Klk3).